Here is a 175-residue protein sequence, read N- to C-terminus: NADH-ubiquinone oxidoreductase chain 6 (175 aa).

6 consecutive transmembrane segments (helical) span residues 1–21 (MMTYVVFILSIVFVIGLIGSP), 25–45 (SPIYGGLGLIVSGGAGCGMVL), 47–67 (FGGSFLGLMVFLVYLGGMLVV), 88–108 (VVLGAFLLGLMMEFLAVLYVL), 115–137 (LVFKFSGLGDWVVYGMSDFGVFS), and 149–169 (YGVWLVVVTGWSLFVGVVVIM).

The protein belongs to the complex I subunit 6 family. As to quaternary structure, core subunit of respiratory chain NADH dehydrogenase (Complex I) which is composed of 45 different subunits.

Its subcellular location is the mitochondrion inner membrane. It catalyses the reaction a ubiquinone + NADH + 5 H(+)(in) = a ubiquinol + NAD(+) + 4 H(+)(out). Its function is as follows. Core subunit of the mitochondrial membrane respiratory chain NADH dehydrogenase (Complex I) which catalyzes electron transfer from NADH through the respiratory chain, using ubiquinone as an electron acceptor. Essential for the catalytic activity and assembly of complex I. The polypeptide is NADH-ubiquinone oxidoreductase chain 6 (MT-ND6) (Hippopotamus amphibius (Hippopotamus)).